The chain runs to 302 residues: ATP synthase gamma chain (302 aa).

The protein belongs to the ATPase gamma chain family. As to quaternary structure, F-type ATPases have 2 components, CF(1) - the catalytic core - and CF(0) - the membrane proton channel. CF(1) has five subunits: alpha(3), beta(3), gamma(1), delta(1), epsilon(1). CF(0) has three main subunits: a, b and c.

It localises to the cell membrane. In terms of biological role, produces ATP from ADP in the presence of a proton gradient across the membrane. The gamma chain is believed to be important in regulating ATPase activity and the flow of protons through the CF(0) complex. In Enterococcus faecalis (strain ATCC 700802 / V583), this protein is ATP synthase gamma chain.